The chain runs to 745 residues: Phosphoribosylformylglycinamidine synthase subunit PurL (745 aa).

His47 is a catalytic residue. Tyr50 and Lys90 together coordinate ATP. Glu92 contacts Mg(2+). Substrate is bound by residues 93 to 96 (SHNH) and Arg115. His94 (proton acceptor) is an active-site residue. Position 116 (Asp116) interacts with Mg(2+). Gln240 is a substrate binding site. Asp268 is a Mg(2+) binding site. 312-314 (ESQ) lines the substrate pocket. ATP contacts are provided by Asn501 and Gly538. Asn539 is a Mg(2+) binding site. Position 541 (Ser541) interacts with substrate.

This sequence belongs to the FGAMS family. Monomer. Part of the FGAM synthase complex composed of 1 PurL, 1 PurQ and 2 PurS subunits.

Its subcellular location is the cytoplasm. The catalysed reaction is N(2)-formyl-N(1)-(5-phospho-beta-D-ribosyl)glycinamide + L-glutamine + ATP + H2O = 2-formamido-N(1)-(5-O-phospho-beta-D-ribosyl)acetamidine + L-glutamate + ADP + phosphate + H(+). It functions in the pathway purine metabolism; IMP biosynthesis via de novo pathway; 5-amino-1-(5-phospho-D-ribosyl)imidazole from N(2)-formyl-N(1)-(5-phospho-D-ribosyl)glycinamide: step 1/2. Part of the phosphoribosylformylglycinamidine synthase complex involved in the purines biosynthetic pathway. Catalyzes the ATP-dependent conversion of formylglycinamide ribonucleotide (FGAR) and glutamine to yield formylglycinamidine ribonucleotide (FGAM) and glutamate. The FGAM synthase complex is composed of three subunits. PurQ produces an ammonia molecule by converting glutamine to glutamate. PurL transfers the ammonia molecule to FGAR to form FGAM in an ATP-dependent manner. PurS interacts with PurQ and PurL and is thought to assist in the transfer of the ammonia molecule from PurQ to PurL. The chain is Phosphoribosylformylglycinamidine synthase subunit PurL from Leptospira borgpetersenii serovar Hardjo-bovis (strain JB197).